The sequence spans 287 residues: Putative sugar uptake protein M6_Spy1874 (287 aa).

10 helical membrane passes run I4–G26, L33–V50, T55–G72, V85–V107, F117–S134, F154–F171, S181–F200, Y207–A229, L234–L256, and V268–V285.

The protein belongs to the GRP transporter (TC 2.A.7.5) family.

It localises to the cell membrane. This is Putative sugar uptake protein M6_Spy1874 from Streptococcus pyogenes serotype M6 (strain ATCC BAA-946 / MGAS10394).